Consider the following 467-residue polypeptide: Actinorhodin polyketide putative beta-ketoacyl synthase 1 (467 aa).

The segment at 1–35 (MPLDAAPVDPASRGPVSAFEPPSSHGADDDDDHRT) is disordered. Residues 45–459 (KRRVVITGVG…GFQSAMVLRD (415 aa)) enclose the Ketosynthase family 3 (KS3) domain. Active-site for beta-ketoacyl synthase activity residues include Cys212, His352, and His389.

It belongs to the thiolase-like superfamily. Beta-ketoacyl-ACP synthases family.

It functions in the pathway antibiotic biosynthesis; actinorhodin biosynthesis. The polypeptide is Actinorhodin polyketide putative beta-ketoacyl synthase 1 (Streptomyces coelicolor (strain ATCC BAA-471 / A3(2) / M145)).